The chain runs to 1033 residues: SIT4-associating protein SAP190 (1033 aa).

3 disordered regions span residues Asp-32–Ser-82, Pro-147–Thr-213, and Phe-768–Phe-1033. The span at Ile-158 to Asp-170 shows a compositional bias: basic and acidic residues. Positions Ala-171–Asn-182 are enriched in acidic residues. Over residues Asp-183 to Asp-195 the composition is skewed to basic and acidic residues. At Ser-774 the chain carries Phosphoserine. Composition is skewed to acidic residues over residues Ser-784 to Gly-793 and Glu-825 to Asp-838. Phosphoserine occurs at positions 857, 862, and 892. The span at Asp-858 to Gly-879 shows a compositional bias: basic and acidic residues. Residues Ser-909–Phe-924 are compositionally biased toward polar residues. Over residues Gly-932 to Asp-944 the composition is skewed to acidic residues. At Thr-990 the chain carries Phosphothreonine. Ser-991 bears the Phosphoserine mark. Positions Ile-1000–Asn-1018 are enriched in acidic residues.

It belongs to the SAPS family. In terms of assembly, associates with the SIT4 protein phosphatase catalytic subunit in a cell-cycle-dependent manner. In terms of processing, hyperphosphorylated in the absence of SIT4.

The protein resides in the cytoplasm. Its function is as follows. Positive regulator of protein phosphatase SIT4. Involved in the general amino acid control (GAAC) response regulated by TOR. Involved in the dephosphorylation of the elongator complex subunit IKI3. In Saccharomyces cerevisiae (strain ATCC 204508 / S288c) (Baker's yeast), this protein is SIT4-associating protein SAP190 (SAP190).